A 546-amino-acid polypeptide reads, in one-letter code: MAAKEILFSDIARSKLTEGVNILANAVKVTLGPKGRNVVLERSFGAPVVTKDGVSVAKEIELADKLQNIGAQLVKEVASRTSDAAGDGTTTATVLAQAIVREGQKYVAAGLNPLDLKRGIDKAVASAVEELKKISKPTTTSKEIAQVATISANGEESIGQRIAEAIDRVGKEGVITVEDGKSLADELDVVEGLQFDRGYLSPYFINNPDKQIAEIESPYILLHDKKISNIRDLLPVLEQVAKSGRPLLIIAEDVEGEALATLVVNNIRGILKTVAVKAPGFGDRRKALLEDIAILTGGQVIAEETGLTLEKTTLAELGQAKRIEVGKENTTVIDGAGDAKNIEARVKQIRVQIEEATSDYDREKLQERVAKLAGGVAVIKVGGATEIEVKEKKDRVDDALHATRAAVEEGIVPGGGVALIRVRQAIRELKGANADQDAGIKIVLRALEEPLRQIVTNAGEEASVVVAKVAEGTGNFGYNAQTGEYGDLVESGVLDPTKVTRTALQNAASVAGLLLTTDATVYEAPKDAAPAAAPGGPGAGGPGFDF.

ATP is bound by residues 30 to 33, K51, 87 to 91, G415, and D495; these read TLGP and DGTTT.

The protein belongs to the chaperonin (HSP60) family. As to quaternary structure, forms a cylinder of 14 subunits composed of two heptameric rings stacked back-to-back. Interacts with the co-chaperonin GroES.

It localises to the cytoplasm. It carries out the reaction ATP + H2O + a folded polypeptide = ADP + phosphate + an unfolded polypeptide.. Its function is as follows. Together with its co-chaperonin GroES, plays an essential role in assisting protein folding. The GroEL-GroES system forms a nano-cage that allows encapsulation of the non-native substrate proteins and provides a physical environment optimized to promote and accelerate protein folding. This is Chaperonin GroEL 2 from Burkholderia cenocepacia (strain HI2424).